The sequence spans 190 residues: 3-isopropylmalate dehydratase small subunit (190 aa).

It belongs to the LeuD family. LeuD type 1 subfamily. In terms of assembly, heterodimer of LeuC and LeuD.

The catalysed reaction is (2R,3S)-3-isopropylmalate = (2S)-2-isopropylmalate. The protein operates within amino-acid biosynthesis; L-leucine biosynthesis; L-leucine from 3-methyl-2-oxobutanoate: step 2/4. Catalyzes the isomerization between 2-isopropylmalate and 3-isopropylmalate, via the formation of 2-isopropylmaleate. The chain is 3-isopropylmalate dehydratase small subunit from Staphylococcus aureus (strain JH1).